The sequence spans 83 residues: Putative membrane protein insertion efficiency factor (83 aa).

Residues 64–83 are disordered; it reads GGFDPVPLKKDKNSKTTHHH.

It belongs to the UPF0161 family.

The protein localises to the cell membrane. Could be involved in insertion of integral membrane proteins into the membrane. The polypeptide is Putative membrane protein insertion efficiency factor (Staphylococcus epidermidis (strain ATCC 12228 / FDA PCI 1200)).